We begin with the raw amino-acid sequence, 333 residues long: Ribosomal RNA small subunit methyltransferase C (333 aa).

This sequence belongs to the methyltransferase superfamily. RsmC family. Monomer.

The protein localises to the cytoplasm. It carries out the reaction guanosine(1207) in 16S rRNA + S-adenosyl-L-methionine = N(2)-methylguanosine(1207) in 16S rRNA + S-adenosyl-L-homocysteine + H(+). Specifically methylates the guanine in position 1207 of 16S rRNA in the 30S particle. This Chromohalobacter salexigens (strain ATCC BAA-138 / DSM 3043 / CIP 106854 / NCIMB 13768 / 1H11) protein is Ribosomal RNA small subunit methyltransferase C.